Consider the following 75-residue polypeptide: Bacteriocin lactococcin-A (75 aa).

Positions 1 to 21 (MKNQLNFNIVSDEELSEANGG) are excised as a propeptide. Residues 30–52 (AAGDLYYNTNTHKYVYQQTQNAF) form a helical membrane-spanning segment.

The protein resides in the secreted. The protein localises to the host cell membrane. Functionally, kills Lactococci. The sequence is that of Bacteriocin lactococcin-A (lcnA) from Lactococcus lactis subsp. cremoris (Streptococcus cremoris).